The primary structure comprises 153 residues: MTDKKRRQRGSRTHGGGTHKNRRGAGNRGGRGRAGRKKHEQHNYEDVGKSGFKRPEKTDRDVAVLSVQELDEDIPVLSESGVAEETEFGYRVDARDVVDDGWDADVVKVLGGGQLYEQLEVTADAFSDAAVELIEGEGGDAVVSERASEDDEE.

The span at 1-40 shows a compositional bias: basic residues; sequence MTDKKRRQRGSRTHGGGTHKNRRGAGNRGGRGRAGRKKHE. Positions 1 to 60 are disordered; that stretch reads MTDKKRRQRGSRTHGGGTHKNRRGAGNRGGRGRAGRKKHEQHNYEDVGKSGFKRPEKTDR. Basic and acidic residues predominate over residues 41–60; the sequence is QHNYEDVGKSGFKRPEKTDR.

The protein belongs to the universal ribosomal protein uL15 family. In terms of assembly, part of the 50S ribosomal subunit.

Binds to the 23S rRNA. This is Large ribosomal subunit protein uL15 from Halobacterium salinarum (strain ATCC 29341 / DSM 671 / R1).